We begin with the raw amino-acid sequence, 384 residues long: Deoxyguanosinetriphosphate triphosphohydrolase-like protein (384 aa).

In terms of domain architecture, HD spans Arg62 to Ile198.

Belongs to the dGTPase family. Type 2 subfamily.

This chain is Deoxyguanosinetriphosphate triphosphohydrolase-like protein, found in Rickettsia conorii (strain ATCC VR-613 / Malish 7).